The chain runs to 277 residues: Type II restriction enzyme RsrI (277 aa).

Belongs to the EcoRI type II restriction endonuclease family. In terms of assembly, homodimer. Mg(2+) serves as cofactor.

The enzyme catalyses Endonucleolytic cleavage of DNA to give specific double-stranded fragments with terminal 5'-phosphates.. Functionally, a P subtype restriction enzyme that recognizes the double-stranded sequence 5'-GAATTC-3' and cleaves after G-1. The sequence is that of Type II restriction enzyme RsrI (rsrIR) from Cereibacter sphaeroides (Rhodobacter sphaeroides).